The chain runs to 941 residues: Pre-mRNA-processing factor 6 (941 aa).

Positions M1 to D79 are disordered. Residues D39–A65 are compositionally biased toward basic and acidic residues. The segment covering A66 to Y78 has biased composition (acidic residues). The residue at position 143 (S143) is a Phosphoserine. A phosphothreonine mark is found at T180, T266, and T275. S279 is modified (phosphoserine). HAT repeat units follow at residues T384 to P416, D418 to E444, T445 to A476, N554 to N586, G588 to L620, G622 to E654, D689 to Q721, E723 to K755, and R855 to Q887.

Identified in the spliceosome B complex. Identified in the spliceosome C complex. Associates with the U5 snRNP particle. Component of the U4/U6-U5 tri-snRNP complex composed of the U4, U6 and U5 snRNAs and at least PRPF3, PRPF4, PRPF6, PRPF8, PRPF31, SNRNP200, TXNL4A, SNRNP40, DDX23, CD2BP2, PPIH, SNU13, EFTUD2, SART1 and USP39, LSm proteins LSm2-8 and Sm proteins. Interacts with ARAF. Interacts with AR and NR3C1, but not ESR1, independently of the presence of hormones. Interacts with USH1G. Phosphorylated by PRP4K during spliceosome assembly. Widely expressed.

It is found in the nucleus. Its subcellular location is the nucleoplasm. The protein resides in the nucleus speckle. Involved in pre-mRNA splicing as component of the U4/U6-U5 tri-snRNP complex, one of the building blocks of the spliceosome. Enhances dihydrotestosterone-induced transactivation activity of AR, as well as dexamethasone-induced transactivation activity of NR3C1, but does not affect estrogen-induced transactivation. The sequence is that of Pre-mRNA-processing factor 6 from Homo sapiens (Human).